We begin with the raw amino-acid sequence, 528 residues long: Phosphoenolpyruvate carboxykinase (ATP) (528 aa).

Substrate-binding residues include arginine 56, tyrosine 192, and lysine 198. ATP contacts are provided by residues lysine 198, histidine 217, and 233–241 (GLSGTGKTT). Mn(2+) is bound by residues lysine 198 and histidine 217. A Mn(2+)-binding site is contributed by aspartate 254. Residues glutamate 282, arginine 319, and threonine 444 each contribute to the ATP site. A substrate-binding site is contributed by arginine 319.

This sequence belongs to the phosphoenolpyruvate carboxykinase (ATP) family. Requires Mn(2+) as cofactor.

It localises to the cytoplasm. It carries out the reaction oxaloacetate + ATP = phosphoenolpyruvate + ADP + CO2. Its pathway is carbohydrate biosynthesis; gluconeogenesis. In terms of biological role, involved in the gluconeogenesis. Catalyzes the conversion of oxaloacetate (OAA) to phosphoenolpyruvate (PEP) through direct phosphoryl transfer between the nucleoside triphosphate and OAA. The protein is Phosphoenolpyruvate carboxykinase (ATP) of Bacillus cereus (strain B4264).